The chain runs to 334 residues: Formamidase (334 aa).

The CN hydrolase domain maps to 14–260 (FLVAAIQFPV…WEIVTGEIYP (247 aa)). Glu60 functions as the Proton acceptor in the catalytic mechanism. The active-site Proton donor is the Lys133. The active-site Nucleophile is the Cys166.

This sequence belongs to the carbon-nitrogen hydrolase superfamily. Aliphatic amidase family.

It carries out the reaction formamide + H2O = formate + NH4(+). Is an aliphatic amidase with a restricted substrate specificity, as it only hydrolyzes formamide. The protein is Formamidase of Helicobacter pylori (strain Shi470).